Consider the following 278-residue polypeptide: uncharacterized protein (278 aa).

Over residues 1 to 16 (MFGLKVKDAQKDDQKS) the composition is skewed to basic and acidic residues. Disordered stretches follow at residues 1 to 86 (MFGL…RGSN) and 98 to 126 (FGTT…TPWL). Composition is skewed to low complexity over residues 33 to 45 (QGTS…RGSS) and 99 to 117 (GTTS…STPS).

This sequence belongs to the adhesin P1 family.

This is an uncharacterized protein from Mycoplasma pneumoniae (strain ATCC 29342 / M129 / Subtype 1) (Mycoplasmoides pneumoniae).